The sequence spans 477 residues: MATATTLSPADAEKLNNLKSAVAGLNQISENEKSGFINLVGRYLSGEAQHIDWSKIQTPTDEVVVPYDKLAPLSEDPAETKKLLDKLVVLKLNGGLGTTMGCTGPKSVIEVRNGLTFLDLIVKQIEALNAKFGCSVPLLLMNSFNTHDDTLKIVEKYANSNIDIHTFNQSQYPRLVTEDFAPLPCKGNSGKDGWYPPGHGDVFPSLMNSGKLDALLAKGKEYVFVANSDNLGAIVDLKILNHLILNKNEYCMEVTPKTLADVKGGTLISYEGKVQLLEIAQVPDEHVNEFKSIEKFKIFNTNNLWVNLSAIKRLVEADALKMEIIPNPKEVDGVKVLQLETAAGAAIKFFDRAIGANVPRSRFLPVKATSDLLLVQSDLYTLTDEGYVIRNPARSNPSNPSIELGPEFKKVANFLGRFKSIPSIIDLDSLKVTGDVWFGSGVTLKGKVTVAAKSGVKLEIPDGAVIANKDINGPEDI.

The residue at position 2 (A2) is an N-acetylalanine. UTP contacts are provided by residues 92 to 95, K106, Q169, and G198; that span reads LNGG. 94–95 lines the substrate pocket; the sequence is GG. Residues H199 and 227-229 contribute to the substrate site; that span reads NSD. D229 and K367 together coordinate UTP.

Belongs to the UDPGP type 1 family. In terms of assembly, monomer. Mg(2+) serves as cofactor.

It localises to the cytoplasm. It catalyses the reaction alpha-D-glucose 1-phosphate + UTP + H(+) = UDP-alpha-D-glucose + diphosphate. Inhibition by uncomplexed, free UTP. In terms of biological role, plays a central role as a glucosyl donor in cellular metabolic pathways. The protein is UTP--glucose-1-phosphate uridylyltransferase of Solanum tuberosum (Potato).